Consider the following 684-residue polypeptide: Ski-like protein (684 aa).

Glycyl lysine isopeptide (Lys-Gly) (interchain with G-Cter in SUMO2) cross-links involve residues Lys-50 and Lys-70. The disordered stretch occupies residues 420–454 (SQSKELTKTEASKSISRQSEKAHSSGKLQKTVSYP). A Phosphoserine modification is found at Ser-452. Glycyl lysine isopeptide (Lys-Gly) (interchain with G-Cter in SUMO2) cross-links involve residues Lys-489 and Lys-527. Residues 536 to 684 (RTYLKQQEKL…ILKSSKTAKE (149 aa)) are a coiled coil.

This sequence belongs to the SKI family. Interacts with CPNE4 (via VWFA domain). Interacts with SMAD2, SMAD3 and RNF111. Isoform 1 interacts with WWP1. In terms of processing, ubiquitinated by RNF111 and ARK2C, promoting proteasomal degradation, leading to enhance the BMP-Smad signaling. As to expression, isoform SNON and isoform SNOA are widely expressed. Highest expression is found in skeletal muscle, followed by placenta and lung. Lowest expression in heart, brain and pancreas. Isoform SNOI expression is restricted to skeletal muscle.

May have regulatory role in cell division or differentiation in response to extracellular signals. The protein is Ski-like protein (SKIL) of Homo sapiens (Human).